Consider the following 291-residue polypeptide: Halorhodopsin (291 aa).

Residues 1–30 lie on the Extracellular side of the membrane; the sequence is MTETLPPVTESAVALQAEVTQRELFEFVLN. The helical transmembrane segment at 31 to 56 threads the bilayer; the sequence is DPLLASSLYINIALAGLSILLFVFMT. The Cytoplasmic portion of the chain corresponds to 57–62; it reads RGLDDP. The helical transmembrane segment at 63–86 threads the bilayer; sequence RAKLIAVSTILVPVVSIASYTGLA. Topologically, residues 87-120 are extracellular; it reads SGLTISVLEMPAGHFAEGSSVMLGGEEVDGVVTM. Residues 121–142 form a helical membrane-spanning segment; that stretch reads WGRYLTWALSTPMILLALGLLA. The Cytoplasmic portion of the chain corresponds to 143 to 145; sequence GSN. A helical transmembrane segment spans residues 146–169; it reads ATKLFTAITFDIAMCVTGLAAALT. Topologically, residues 170 to 172 are extracellular; it reads TSS. The chain crosses the membrane as a helical span at residues 173 to 195; the sequence is HLMRWFWYAISCACFLVVLYILL. Over 196 to 207 the chain is Cytoplasmic; it reads VEWAQDAKAAGT. Residues 208–231 form a helical membrane-spanning segment; sequence ADMFNTLKLLTVVMWLGYPIVWAL. Residues 232 to 240 lie on the Extracellular side of the membrane; that stretch reads GVEGIAVLP. Residues 241-269 traverse the membrane as a helical segment; sequence VGVTSWGYSFLDIVAKYIFAFLLLNYLTS. Position 256 is an N6-(retinylidene)lysine (Lys256). Over 270 to 291 the chain is Cytoplasmic; it reads NESVVSGSILDVPSASGTPADD.

It belongs to the archaeal/bacterial/fungal opsin family.

The protein resides in the cell membrane. In terms of biological role, light-driven anion pump. Binding affinity for the anions is in the order, bromide &gt; chloride &gt; nitrate &gt; azide &gt; bromate and binding is pH dependent. The polypeptide is Halorhodopsin (hop) (Natronomonas pharaonis (Natronobacterium pharaonis)).